A 218-amino-acid chain; its full sequence is Octanoyltransferase (218 aa).

Residues 32 to 218 enclose the BPL/LPL catalytic domain; that stretch reads GDAPEAVWLL…LRTFSRSFPD (187 aa). Residues 71 to 78, 151 to 153, and 164 to 166 each bind substrate; these read RGGQYTYH, AIG, and GLS. The active-site Acyl-thioester intermediate is Cys182.

This sequence belongs to the LipB family.

Its subcellular location is the cytoplasm. It catalyses the reaction octanoyl-[ACP] + L-lysyl-[protein] = N(6)-octanoyl-L-lysyl-[protein] + holo-[ACP] + H(+). The protein operates within protein modification; protein lipoylation via endogenous pathway; protein N(6)-(lipoyl)lysine from octanoyl-[acyl-carrier-protein]: step 1/2. Catalyzes the transfer of endogenously produced octanoic acid from octanoyl-acyl-carrier-protein onto the lipoyl domains of lipoate-dependent enzymes. Lipoyl-ACP can also act as a substrate although octanoyl-ACP is likely to be the physiological substrate. The sequence is that of Octanoyltransferase from Cereibacter sphaeroides (strain ATCC 17025 / ATH 2.4.3) (Rhodobacter sphaeroides).